The following is a 571-amino-acid chain: Apolipoprotein N-acyltransferase (571 aa).

6 helical membrane-spanning segments follow: residues 13-33 (VVLW…IALV), 51-68 (LYAA…GLRY), 72-92 (LMFL…VLFI), 118-138 (LVAA…FTGI), 152-172 (MLIQ…IVCV), and 199-219 (LVTA…SMNA). The region spanning 234–527 (NELTVYEQDI…SDVIYAQPRR (294 aa)) is the CN hydrolase domain. The Proton acceptor role is filled by E275. The active site involves K380. The active-site Nucleophile is the C430. The chain crosses the membrane as a helical span at residues 542–562 (AGLMGAATLCGLAWMTFEWLM).

Belongs to the CN hydrolase family. Apolipoprotein N-acyltransferase subfamily.

Its subcellular location is the cell inner membrane. It carries out the reaction N-terminal S-1,2-diacyl-sn-glyceryl-L-cysteinyl-[lipoprotein] + a glycerophospholipid = N-acyl-S-1,2-diacyl-sn-glyceryl-L-cysteinyl-[lipoprotein] + a 2-acyl-sn-glycero-3-phospholipid + H(+). It functions in the pathway protein modification; lipoprotein biosynthesis (N-acyl transfer). Catalyzes the phospholipid dependent N-acylation of the N-terminal cysteine of apolipoprotein, the last step in lipoprotein maturation. The protein is Apolipoprotein N-acyltransferase of Rhodopirellula baltica (strain DSM 10527 / NCIMB 13988 / SH1).